The sequence spans 274 residues: NADPH-dependent 7-cyano-7-deazaguanine reductase (274 aa).

Residue 80 to 82 (VES) coordinates substrate. Position 82–83 (82–83 (SK)) interacts with NADPH. The active-site Thioimide intermediate is cysteine 181. Catalysis depends on aspartate 188, which acts as the Proton donor. 220–221 (HE) serves as a coordination point for substrate. 249-250 (RG) provides a ligand contact to NADPH.

This sequence belongs to the GTP cyclohydrolase I family. QueF type 2 subfamily. Homodimer.

It is found in the cytoplasm. The catalysed reaction is 7-aminomethyl-7-carbaguanine + 2 NADP(+) = 7-cyano-7-deazaguanine + 2 NADPH + 3 H(+). Its pathway is tRNA modification; tRNA-queuosine biosynthesis. In terms of biological role, catalyzes the NADPH-dependent reduction of 7-cyano-7-deazaguanine (preQ0) to 7-aminomethyl-7-deazaguanine (preQ1). The protein is NADPH-dependent 7-cyano-7-deazaguanine reductase of Burkholderia pseudomallei (strain 1106a).